Reading from the N-terminus, the 368-residue chain is Cytochrome P450 119 (368 aa).

The heme site is built by histidine 76, arginine 80, threonine 257, arginine 259, histidine 315, and cysteine 317.

This sequence belongs to the cytochrome P450 family. Heme is required as a cofactor.

It is found in the cytoplasm. It carries out the reaction 2 a phenolic donor + H2O2 = 2 a phenolic radical donor + 2 H2O. In terms of biological role, the endogenous substrate is not known. In vitro, catalyzes the H(2)O(2)-dependent epoxidation of styrene, cis-beta-methylstyrene, and cis-stilbene with retention of stereochemistry. Is able to use cumene hydroperoxide (CHP) or tert-butyl hydroperoxide (TBHP) instead of H(2)O(2) as the electron acceptor. Can also hydroxylate fatty acids such as lauric acid. The polypeptide is Cytochrome P450 119 (cyp119) (Sulfolobus acidocaldarius (strain ATCC 33909 / DSM 639 / JCM 8929 / NBRC 15157 / NCIMB 11770)).